Consider the following 430-residue polypeptide: Signal recognition particle protein (430 aa).

Residues 105 to 112 (GLQGSGKT), 187 to 191 (DTAGR), and 245 to 248 (TKLD) each bind GTP.

It belongs to the GTP-binding SRP family. SRP54 subfamily. Part of the signal recognition particle protein translocation system, which is composed of SRP and FtsY.

The protein resides in the cytoplasm. The enzyme catalyses GTP + H2O = GDP + phosphate + H(+). In terms of biological role, involved in targeting and insertion of nascent membrane proteins into the cytoplasmic membrane. Binds to the hydrophobic signal sequence of the ribosome-nascent chain (RNC) as it emerges from the ribosomes. The SRP-RNC complex is then targeted to the cytoplasmic membrane where it interacts with the SRP receptor FtsY. In Thermus aquaticus, this protein is Signal recognition particle protein.